The chain runs to 812 residues: Mitochondrial intermediate peptidase (812 aa).

The N-terminal 29 residues, 1–29, are a transit peptide targeting the mitochondrion; that stretch reads MRLSRQLLRSTPFLTRAKPVSGKVSHFRS. The interval 19–49 is disordered; sequence PVSGKVSHFRSRTDLKGGSSNSSKSPDSVGD. Positions 37–46 are enriched in low complexity; the sequence is SSNSSKSPDS. H595 provides a ligand contact to Zn(2+). E596 is a catalytic residue. Positions 599 and 602 each coordinate Zn(2+).

It belongs to the peptidase M3 family. The cofactor is Zn(2+).

The protein resides in the mitochondrion matrix. It carries out the reaction Release of an N-terminal octapeptide as second stage of processing of some proteins imported into the mitochondrion.. Functionally, cleaves proteins, imported into the mitochondrion, to their mature size. While most mitochondrial precursor proteins are processed to the mature form in one step by mitochondrial processing peptidase (MPP), the sequential cleavage by MIP of an octapeptide after initial processing by MPP is a required step for a subgroup of nuclear-encoded precursor proteins destined for the matrix or the inner membrane. The protein is Mitochondrial intermediate peptidase (OCT1) of Scheffersomyces stipitis (strain ATCC 58785 / CBS 6054 / NBRC 10063 / NRRL Y-11545) (Yeast).